We begin with the raw amino-acid sequence, 72 residues long: uncharacterized protein (72 aa).

This is an uncharacterized protein from Escherichia coli (strain K12).